The sequence spans 158 residues: Small ribosomal subunit protein uS7 (158 aa).

This sequence belongs to the universal ribosomal protein uS7 family. In terms of assembly, part of the 30S ribosomal subunit. Contacts proteins S9 and S11.

Functionally, one of the primary rRNA binding proteins, it binds directly to 16S rRNA where it nucleates assembly of the head domain of the 30S subunit. Is located at the subunit interface close to the decoding center, probably blocks exit of the E-site tRNA. The protein is Small ribosomal subunit protein uS7 of Azobacteroides pseudotrichonymphae genomovar. CFP2.